Reading from the N-terminus, the 307-residue chain is Acetaldehyde dehydrogenase (307 aa).

Residue S12–I15 coordinates NAD(+). C130 functions as the Acyl-thioester intermediate in the catalytic mechanism. NAD(+) is bound by residues S161–N169 and N272.

This sequence belongs to the acetaldehyde dehydrogenase family.

It catalyses the reaction acetaldehyde + NAD(+) + CoA = acetyl-CoA + NADH + H(+). The protein is Acetaldehyde dehydrogenase of Shewanella pealeana (strain ATCC 700345 / ANG-SQ1).